The sequence spans 1213 residues: Formin (1213 aa).

Disordered stretches follow at residues 1–24 (MEGG…SEPD), 66–111 (QANN…EPEP), 144–169 (VHTT…TSKC), 183–216 (GNNQ…PISQ), and 357–489 (DVSK…PKAN). 2 stretches are compositionally biased toward basic and acidic residues: residues 187–210 (SKEE…DTEL) and 431–464 (EAIK…DKSP). 2 coiled-coil regions span residues 428-450 (SELE…VFER) and 503-572 (EYQA…IGVS). A disordered region spans residues 624–774 (ISTQGENKDS…PRKPAIEPSR (151 aa)). Polar residues predominate over residues 636–647 (VPSSESVLSCQP). Composition is skewed to pro residues over residues 650–672 (MLPP…PPPF), 680–689 (LVPPPPPLPT), and 718–751 (PAPP…PPGP). The 100-residue stretch at 652 to 751 (PPSPPPPPPP…LPPPPPPPGP (100 aa)) folds into the FH1 domain. Over residues 755 to 764 (FNSTLSSSQG) the composition is skewed to polar residues. The FH2 domain maps to 766–1182 (RKPAIEPSRP…KVAQQSVSKL (417 aa)). Positions 1050 to 1125 (FQASQVKFED…ENAQKCFEET (76 aa)) form a coiled coil. Positions 1193 to 1213 (INPTASLKERLRQKEANVNAN) are disordered.

The protein belongs to the formin homology family. Cappuccino subfamily. Present in the adult brain, kidney, brain, heart and intestine and throughout the embryo.

Its subcellular location is the nucleus. Its function is as follows. Is important for morphogenesis of limb and kidney and may be involved in determining dorsoventral neural tube polarity and motor neuron induction. It may also have a function in differentiated cells or be involved in maintaining specific differentiated states. The protein is Formin (LD) of Gallus gallus (Chicken).